The primary structure comprises 445 residues: Guanosine nucleotide diphosphate dissociation inhibitor 1 (445 aa).

Belongs to the Rab GDI family. As to quaternary structure, interacts with the GDP-bound form of RABA5C (via C-terminus). In terms of tissue distribution, expressed in roots, rosette leaves, stems, floral buds and siliques.

Functionally, regulates the GDP/GTP exchange reaction of most RAB proteins by inhibiting the dissociation of GDP from them, and the subsequent binding of GTP. In Arabidopsis thaliana (Mouse-ear cress), this protein is Guanosine nucleotide diphosphate dissociation inhibitor 1 (GDI1).